Here is a 198-residue protein sequence, read N- to C-terminus: Ribonuclease HII (198 aa).

Residues 2–192 (MYYCGIDEAG…IKKIIDNQKN (191 aa)) form the RNase H type-2 domain. A divalent metal cation is bound by residues Asp-8, Glu-9, and Asp-101.

The protein belongs to the RNase HII family. Mn(2+) serves as cofactor. The cofactor is Mg(2+).

It is found in the cytoplasm. The enzyme catalyses Endonucleolytic cleavage to 5'-phosphomonoester.. In terms of biological role, endonuclease that specifically degrades the RNA of RNA-DNA hybrids. This is Ribonuclease HII from Natranaerobius thermophilus (strain ATCC BAA-1301 / DSM 18059 / JW/NM-WN-LF).